A 536-amino-acid polypeptide reads, in one-letter code: CTP synthase (536 aa).

Residues 1-267 (MSKFVFVTGG…CKETLNYLEL (267 aa)) are amidoligase domain. Serine 13 contacts CTP. Serine 13 provides a ligand contact to UTP. Residues 14 to 19 (SIGKGI) and aspartate 71 contribute to the ATP site. Residues aspartate 71 and glutamate 141 each coordinate Mg(2+). Residues 148–150 (DIE), 188–193 (KTKPTQ), and lysine 224 contribute to the CTP site. UTP is bound by residues 188–193 (KTKPTQ) and lysine 224. In terms of domain architecture, Glutamine amidotransferase type-1 spans 292–534 (KVALVGKYIE…IKASQDKLTQ (243 aa)). L-glutamine is bound at residue glycine 354. The active-site Nucleophile; for glutamine hydrolysis is cysteine 381. L-glutamine contacts are provided by residues 382–385 (LGMQ), glutamate 405, and arginine 462. Residues histidine 507 and glutamate 509 contribute to the active site.

Belongs to the CTP synthase family. Homotetramer.

The catalysed reaction is UTP + L-glutamine + ATP + H2O = CTP + L-glutamate + ADP + phosphate + 2 H(+). The enzyme catalyses L-glutamine + H2O = L-glutamate + NH4(+). It carries out the reaction UTP + NH4(+) + ATP = CTP + ADP + phosphate + 2 H(+). The protein operates within pyrimidine metabolism; CTP biosynthesis via de novo pathway; CTP from UDP: step 2/2. Allosterically activated by GTP, when glutamine is the substrate; GTP has no effect on the reaction when ammonia is the substrate. The allosteric effector GTP functions by stabilizing the protein conformation that binds the tetrahedral intermediate(s) formed during glutamine hydrolysis. Inhibited by the product CTP, via allosteric rather than competitive inhibition. Its function is as follows. Catalyzes the ATP-dependent amination of UTP to CTP with either L-glutamine or ammonia as the source of nitrogen. Regulates intracellular CTP levels through interactions with the four ribonucleotide triphosphates. This chain is CTP synthase, found in Prochlorococcus marinus (strain MIT 9301).